Consider the following 360-residue polypeptide: Leukotriene B4 receptor 2 (360 aa).

Residues 1–24 lie on the Extracellular side of the membrane; it reads MSVCYRPPGNETLLSWKGSRATGT. N-linked (GlcNAc...) asparagine glycosylation occurs at Asn-10. The chain crosses the membrane as a helical span at residues 25 to 45; it reads AFLLLAALLGLPGNGFVVWSL. The Cytoplasmic portion of the chain corresponds to 46-60; sequence AGWRPTAGRPLAATL. The chain crosses the membrane as a helical span at residues 61 to 81; the sequence is VLHLALADGAVLLLTPLFVAF. Residues 82–96 are Extracellular-facing; the sequence is LSQEAWPLGQVGCKA. The helical transmembrane segment at 97-117 threads the bilayer; it reads VYYVCALSMYASVLLTGLLSL. The Cytoplasmic segment spans residues 118 to 140; it reads QRCLAVTRPFLAPRLRSPALARR. The chain crosses the membrane as a helical span at residues 141-161; the sequence is LLLGVWLAALVLAVPAAVYRH. The Extracellular portion of the chain corresponds to 162-185; the sequence is LWGGRVCQLCHPSPVHAAAHLSLE. Residues 186-206 form a helical membrane-spanning segment; it reads TLTAFVLPFGTVLGCYGVTLA. Over 207–224 the chain is Cytoplasmic; sequence RLRGARWGSGRQGTRVGR. The helical transmembrane segment at 225 to 245 threads the bilayer; sequence LVSAIVLAFGLLWAPYHAVNL. Over 246–275 the chain is Extracellular; that stretch reads LQAVAALAPPEGPLARLGGAGQAARAGTTA. The chain crosses the membrane as a helical span at residues 276–296; sequence LAFFSSSVNPVLYVFTAGDLL. Residues 297-360 are Cytoplasmic-facing; the sequence is PRAGPRFLTR…GKTEKDSQEW (64 aa). Residues 311 to 360 form a disordered region; sequence SGEARGGSRSREGTMELRTTPKLKVMGQGRGNGDPGGGDGGKTEKDSQEW. A compositionally biased stretch (gly residues) spans 338 to 350; the sequence is QGRGNGDPGGGDG. A compositionally biased stretch (basic and acidic residues) spans 351–360; it reads GKTEKDSQEW.

The protein belongs to the G-protein coupled receptor 1 family.

Its subcellular location is the cell membrane. Functionally, low-affinity receptor for leukotrienes including leukotriene B4. Mediates chemotaxis of granulocytes and macrophages. The response is mediated via G-proteins that activate a phosphatidylinositol-calcium second messenger system. The sequence is that of Leukotriene B4 receptor 2 (Ltb4r2) from Mus musculus (Mouse).